The sequence spans 111 residues: Phosphoribosyl-AMP cyclohydrolase (111 aa).

Asp-80 provides a ligand contact to Mg(2+). Zn(2+) is bound at residue Cys-81. Residues Asp-82 and Asp-84 each coordinate Mg(2+). Residues Cys-97 and Cys-104 each coordinate Zn(2+).

The protein belongs to the PRA-CH family. As to quaternary structure, homodimer. The cofactor is Mg(2+). Requires Zn(2+) as cofactor.

Its subcellular location is the cytoplasm. The catalysed reaction is 1-(5-phospho-beta-D-ribosyl)-5'-AMP + H2O = 1-(5-phospho-beta-D-ribosyl)-5-[(5-phospho-beta-D-ribosylamino)methylideneamino]imidazole-4-carboxamide. It functions in the pathway amino-acid biosynthesis; L-histidine biosynthesis; L-histidine from 5-phospho-alpha-D-ribose 1-diphosphate: step 3/9. Functionally, catalyzes the hydrolysis of the adenine ring of phosphoribosyl-AMP. The sequence is that of Phosphoribosyl-AMP cyclohydrolase from Mycobacterium ulcerans (strain Agy99).